The following is a 106-amino-acid chain: UPF0060 membrane protein Mrad2831_0929 (106 aa).

4 helical membrane-spanning segments follow: residues 3–23, 30–50, 59–79, and 87–104; these read LLAY…FWAW, AWWT…LTLV, FAAY…LAEG, and LAGS…LLGR.

This sequence belongs to the UPF0060 family.

It localises to the cell inner membrane. The polypeptide is UPF0060 membrane protein Mrad2831_0929 (Methylobacterium radiotolerans (strain ATCC 27329 / DSM 1819 / JCM 2831 / NBRC 15690 / NCIMB 10815 / 0-1)).